A 240-amino-acid chain; its full sequence is PF03932 family protein CutC (240 aa).

It belongs to the CutC family.

The protein localises to the cytoplasm. The protein is PF03932 family protein CutC of Xanthomonas axonopodis pv. citri (strain 306).